The primary structure comprises 249 residues: Seipin homolog (249 aa).

At 1–10 (MGYLVKLFKL) the chain is on the cytoplasmic side. The helical transmembrane segment at 11-31 (VVWMLVIGLFSIPSLVSYVIF) threads the bilayer. Residues 32-212 (YDTVIPHSVI…GMRWFMYTHK (181 aa)) are Lumenal-facing. Residues 213 to 233 (VSAFLVFTSLFWFTGITSTII) form a helical membrane-spanning segment. Residues 234–249 (TYLIVSSTSETKATRR) are Cytoplasmic-facing.

Belongs to the seipin family.

The protein resides in the endoplasmic reticulum membrane. Involved in lipid metabolism and lipid droplet (LD) morphology, number, and size. Facilitates initiation of LD formation, and ensures that vectorial budding of LDs from the ER is directed towards the cytoplasm. The chain is Seipin homolog from Schizosaccharomyces pombe (strain 972 / ATCC 24843) (Fission yeast).